A 108-amino-acid polypeptide reads, in one-letter code: Large ribosomal subunit protein uL24 (108 aa).

It belongs to the universal ribosomal protein uL24 family. As to quaternary structure, part of the 50S ribosomal subunit.

Its function is as follows. One of two assembly initiator proteins, it binds directly to the 5'-end of the 23S rRNA, where it nucleates assembly of the 50S subunit. In terms of biological role, one of the proteins that surrounds the polypeptide exit tunnel on the outside of the subunit. This Pelobacter propionicus (strain DSM 2379 / NBRC 103807 / OttBd1) protein is Large ribosomal subunit protein uL24.